Here is a 246-residue protein sequence, read N- to C-terminus: Ly6/PLAUR domain-containing protein 4 (246 aa).

An N-terminal signal peptide occupies residues 1 to 26 (MGPQHLRLVQLFCLLGAISTLPRAGA). Asparagine 117 carries N-linked (GlcNAc...) asparagine glycosylation. The 82-residue stretch at 142–223 (CPTCVGEHMK…LNILEKSQIV (82 aa)) folds into the UPAR/Ly6 domain. Residue alanine 225 is the site of GPI-anchor amidated alanine attachment. A propeptide spans 226-246 (ASSRQDPAWGVVLGLLFAFRD) (removed in mature form).

It is found in the cell membrane. This is Ly6/PLAUR domain-containing protein 4 (LYPD4) from Homo sapiens (Human).